A 668-amino-acid chain; its full sequence is Bifunctional polymyxin resistance protein ArnA (668 aa).

The formyltransferase ArnAFT stretch occupies residues 1-307 (MSAKTVVFAY…ELGLVDGSLL (307 aa)). H106 acts as the Proton donor; for formyltransferase activity in catalysis. Residues R116 and 138–142 (VKRAD) each bind (6R)-10-formyltetrahydrofolate. The dehydrogenase ArnADH stretch occupies residues 317-668 (RRTRVLILGV…IERPSNKEAC (352 aa)). Residues D350 and 371-372 (DI) each bind NAD(+). UDP-alpha-D-glucuronate contacts are provided by residues A396, Y401, and 435-436 (TS). The Proton acceptor; for decarboxylase activity role is filled by E437. UDP-alpha-D-glucuronate-binding positions include R463, N494, 528-537 (RLFDGGEQKR), and Y615. R621 serves as the catalytic Proton donor; for decarboxylase activity.

In the N-terminal section; belongs to the Fmt family. UDP-L-Ara4N formyltransferase subfamily. The protein in the C-terminal section; belongs to the NAD(P)-dependent epimerase/dehydratase family. UDP-glucuronic acid decarboxylase subfamily. In terms of assembly, homohexamer, formed by a dimer of trimers.

It catalyses the reaction UDP-alpha-D-glucuronate + NAD(+) = UDP-beta-L-threo-pentopyranos-4-ulose + CO2 + NADH. The enzyme catalyses UDP-4-amino-4-deoxy-beta-L-arabinose + (6R)-10-formyltetrahydrofolate = UDP-4-deoxy-4-formamido-beta-L-arabinose + (6S)-5,6,7,8-tetrahydrofolate + H(+). It functions in the pathway nucleotide-sugar biosynthesis; UDP-4-deoxy-4-formamido-beta-L-arabinose biosynthesis; UDP-4-deoxy-4-formamido-beta-L-arabinose from UDP-alpha-D-glucuronate: step 1/3. It participates in nucleotide-sugar biosynthesis; UDP-4-deoxy-4-formamido-beta-L-arabinose biosynthesis; UDP-4-deoxy-4-formamido-beta-L-arabinose from UDP-alpha-D-glucuronate: step 3/3. The protein operates within bacterial outer membrane biogenesis; lipopolysaccharide biosynthesis. Its function is as follows. Bifunctional enzyme that catalyzes the oxidative decarboxylation of UDP-glucuronic acid (UDP-GlcUA) to UDP-4-keto-arabinose (UDP-Ara4O) and the addition of a formyl group to UDP-4-amino-4-deoxy-L-arabinose (UDP-L-Ara4N) to form UDP-L-4-formamido-arabinose (UDP-L-Ara4FN). The modified arabinose is attached to lipid A and is required for resistance to polymyxin and cationic antimicrobial peptides. This is Bifunctional polymyxin resistance protein ArnA from Pseudomonas fluorescens (strain Pf0-1).